The sequence spans 330 residues: B3 domain-containing protein REM21 (330 aa).

Positions 23-116 (PRFFTVFLSH…SYEVSIYGRG (94 aa)) form a DNA-binding region, TF-B3. Acidic residues predominate over residues 129–138 (EISDDTEDDN). The interval 129–169 (EISDDTEDDNVSLHSPSNVSLDSLSNDSHHSTSNVSLRSLS) is disordered. The segment covering 142-162 (HSPSNVSLDSLSNDSHHSTSN) has biased composition (low complexity).

It localises to the nucleus. The polypeptide is B3 domain-containing protein REM21 (REM21) (Arabidopsis thaliana (Mouse-ear cress)).